The sequence spans 184 residues: ATP synthase subunit b, chloroplastic (184 aa).

The helical transmembrane segment at 27–49 (LATNPINLSVVLGVLIFFGKGVL) threads the bilayer.

This sequence belongs to the ATPase B chain family. F-type ATPases have 2 components, F(1) - the catalytic core - and F(0) - the membrane proton channel. F(1) has five subunits: alpha(3), beta(3), gamma(1), delta(1), epsilon(1). F(0) has four main subunits: a(1), b(1), b'(1) and c(10-14). The alpha and beta chains form an alternating ring which encloses part of the gamma chain. F(1) is attached to F(0) by a central stalk formed by the gamma and epsilon chains, while a peripheral stalk is formed by the delta, b and b' chains.

The protein localises to the plastid. Its subcellular location is the chloroplast thylakoid membrane. Its function is as follows. F(1)F(0) ATP synthase produces ATP from ADP in the presence of a proton or sodium gradient. F-type ATPases consist of two structural domains, F(1) containing the extramembraneous catalytic core and F(0) containing the membrane proton channel, linked together by a central stalk and a peripheral stalk. During catalysis, ATP synthesis in the catalytic domain of F(1) is coupled via a rotary mechanism of the central stalk subunits to proton translocation. In terms of biological role, component of the F(0) channel, it forms part of the peripheral stalk, linking F(1) to F(0). The protein is ATP synthase subunit b, chloroplastic of Nicotiana tomentosiformis (Tobacco).